The following is a 354-amino-acid chain: Ferredoxin--NADP reductase, chloroplastic (354 aa).

The N-terminal 35 residues, methionine 1 to alanine 35, are a transit peptide targeting the chloroplast. An FAD-binding FR-type domain is found at lysine 69–leucine 198. 2 positions are modified to N6,N6,N6-trimethyllysine: lysine 118 and lysine 124. Residues arginine 130–serine 133, cysteine 151–arginine 153, and tyrosine 157 each bind FAD. The NADP(+) site is built by serine 133 and arginine 153. Lysine 170 carries the post-translational modification N6,N6-dimethyllysine. FAD-binding positions include leucine 172 to serine 174 and threonine 213. Residues threonine 213, valine 245–glycine 246, serine 275–arginine 276, lysine 285, glycine 313–leucine 314, and glutamate 352 contribute to the NADP(+) site.

This sequence belongs to the ferredoxin--NADP reductase type 1 family. FAD is required as a cofactor.

Its subcellular location is the plastid. The protein localises to the chloroplast stroma. It is found in the chloroplast thylakoid membrane. It catalyses the reaction 2 reduced [2Fe-2S]-[ferredoxin] + NADP(+) + H(+) = 2 oxidized [2Fe-2S]-[ferredoxin] + NADPH. It functions in the pathway energy metabolism; photosynthesis. May play a key role in regulating the relative amounts of cyclic and non-cyclic electron flow to meet the demands of the plant for ATP and reducing power. This chain is Ferredoxin--NADP reductase, chloroplastic (PETH), found in Chlamydomonas reinhardtii (Chlamydomonas smithii).